Consider the following 88-residue polypeptide: Apolipoprotein C-I (88 aa).

Positions 1 to 26 (MRLILSLPVLVVVLSMVLEGPAPAQA) are cleaved as a signal peptide.

The protein belongs to the apolipoprotein C1 family. In terms of tissue distribution, expressed in the liver.

The protein resides in the secreted. Functionally, inhibitor of lipoprotein binding to the low density lipoprotein (LDL) receptor, LDL receptor-related protein, and very low density lipoprotein (VLDL) receptor. Associates with high density lipoproteins (HDL) and the triacylglycerol-rich lipoproteins in the plasma and makes up about 10% of the protein of the VLDL and 2% of that of HDL. Appears to interfere directly with fatty acid uptake and is also the major plasma inhibitor of cholesteryl ester transfer protein (CETP). Binds free fatty acids and reduces their intracellular esterification. Modulates the interaction of APOE with beta-migrating VLDL and inhibits binding of beta-VLDL to the LDL receptor-related protein. This Canis lupus familiaris (Dog) protein is Apolipoprotein C-I (APOC1).